The sequence spans 299 residues: ATP phosphoribosyltransferase (299 aa).

This sequence belongs to the ATP phosphoribosyltransferase family. Long subfamily. In terms of assembly, equilibrium between an active dimeric form, an inactive hexameric form and higher aggregates. Interconversion between the various forms is largely reversible and is influenced by the natural substrates and inhibitors of the enzyme. It depends on Mg(2+) as a cofactor.

The protein resides in the cytoplasm. The enzyme catalyses 1-(5-phospho-beta-D-ribosyl)-ATP + diphosphate = 5-phospho-alpha-D-ribose 1-diphosphate + ATP. It functions in the pathway amino-acid biosynthesis; L-histidine biosynthesis; L-histidine from 5-phospho-alpha-D-ribose 1-diphosphate: step 1/9. Feedback inhibited by histidine. In terms of biological role, catalyzes the condensation of ATP and 5-phosphoribose 1-diphosphate to form N'-(5'-phosphoribosyl)-ATP (PR-ATP). Has a crucial role in the pathway because the rate of histidine biosynthesis seems to be controlled primarily by regulation of HisG enzymatic activity. The polypeptide is ATP phosphoribosyltransferase (Shigella dysenteriae serotype 1 (strain Sd197)).